A 336-amino-acid polypeptide reads, in one-letter code: Nuclear egress protein 2 (336 aa).

Over 1–315 (MASPEERLLD…AWRYSWRATP (315 aa)) the chain is Perinuclear space. Disordered regions lie at residues 193 to 221 (RSGQ…GCLG) and 277 to 297 (RTRE…VPPE). A compositionally biased stretch (basic residues) spans 277–288 (RTRETRRMRGSH). The chain crosses the membrane as a helical span at residues 316 to 333 (YLARVLAVTAVALLLMFL). Residues 334-336 (RWT) lie on the Nuclear side of the membrane.

The protein belongs to the herpesviridae NEC2 protein family. As to quaternary structure, forms a heterodimeric viral nuclear egress complex (NEC) with NEC1. Interacts with host IKBKE; this interaction inhibits host IKBKE kinase activity and IRF3 nuclear translocation. Post-translationally, phosphorylated.

It localises to the host nucleus inner membrane. Its subcellular location is the host cytoplasm. It is found in the host perinuclear region. Functionally, plays an essential role in virion nuclear egress, the first step of virion release from infected cell. Within the host nucleus, NEC1 interacts with the newly formed capsid through the vertexes and directs it to the inner nuclear membrane by associating with NEC2. Induces the budding of the capsid at the inner nuclear membrane as well as its envelopment into the perinuclear space. There, the NEC1/NEC2 complex promotes the fusion of the enveloped capsid with the outer nuclear membrane and the subsequent release of the viral capsid into the cytoplasm where it will reach the secondary budding sites in the host Golgi or trans-Golgi network. Inhibits host IKBKE and IRF3, thereby impairing type I IFN signaling. This Homo sapiens (Human) protein is Nuclear egress protein 2.